We begin with the raw amino-acid sequence, 145 residues long: Large ribosomal subunit protein uL15 (145 aa).

The disordered stretch occupies residues M1–L57. Over residues R21–G31 the composition is skewed to gly residues.

The protein belongs to the universal ribosomal protein uL15 family. As to quaternary structure, part of the 50S ribosomal subunit.

In terms of biological role, binds to the 23S rRNA. The polypeptide is Large ribosomal subunit protein uL15 (Pseudomonas fluorescens (strain Pf0-1)).